A 454-amino-acid polypeptide reads, in one-letter code: MSTTVIILAAGKGTRMRSQLPKVLQPLAGRPLLGHVIKTAKQLLAENIITIYGHGGDHVKKTFAQENIQWVEQAEQLGTGHAVQMTLPVLPKDGISLILYGDVPLVRQTTLEQLIEVSNKTGIGMITLHVDNPTGYGRIVRQDGKIQAIVEHKDATEAQRQIQEINTGIYCVSNAKLHEWLPKLSNENAQGEYYLTDIVAMAVADGLEIASIQPELAFEVEGVNDRLQLAALEREFQKQQAKELMQQGVTFADPARFDLRGTVKVGHDVRIDVNVIIEGNCELGDFVEIGAGCILKNTTIAAGTKVQAYSVFDGAVVGENTQIGPFARLRPGAKLANEVHIGNFVEVKNTTIGLGSKANHFTYLGDAEIGAESNIGAGTITCNYDGANKHKTTIGDAVFIGSNSSLVAPVTIGNGATVGAGSVITKDVAEQSLSFERAQQISKANYQRPQKLKK.

A pyrophosphorylase region spans residues 1 to 226; sequence MSTTVIILAA…AFEVEGVNDR (226 aa). UDP-N-acetyl-alpha-D-glucosamine is bound by residues 8-11, lysine 22, glutamine 73, 78-79, 100-102, glycine 137, glutamate 151, asparagine 166, and asparagine 224; these read LAAG, GT, and YGD. Aspartate 102 provides a ligand contact to Mg(2+). Residue asparagine 224 participates in Mg(2+) binding. Positions 227–247 are linker; it reads LQLAALEREFQKQQAKELMQQ. Residues 248-454 form an N-acetyltransferase region; the sequence is GVTFADPARF…NYQRPQKLKK (207 aa). 2 residues coordinate UDP-N-acetyl-alpha-D-glucosamine: arginine 330 and lysine 348. Histidine 360 functions as the Proton acceptor in the catalytic mechanism. Tyrosine 363 and asparagine 374 together coordinate UDP-N-acetyl-alpha-D-glucosamine. Residues alanine 377, 383–384, serine 402, alanine 420, and arginine 437 contribute to the acetyl-CoA site; that span reads NY.

It in the N-terminal section; belongs to the N-acetylglucosamine-1-phosphate uridyltransferase family. This sequence in the C-terminal section; belongs to the transferase hexapeptide repeat family. As to quaternary structure, homotrimer. It depends on Mg(2+) as a cofactor.

Its subcellular location is the cytoplasm. The catalysed reaction is alpha-D-glucosamine 1-phosphate + acetyl-CoA = N-acetyl-alpha-D-glucosamine 1-phosphate + CoA + H(+). The enzyme catalyses N-acetyl-alpha-D-glucosamine 1-phosphate + UTP + H(+) = UDP-N-acetyl-alpha-D-glucosamine + diphosphate. The protein operates within nucleotide-sugar biosynthesis; UDP-N-acetyl-alpha-D-glucosamine biosynthesis; N-acetyl-alpha-D-glucosamine 1-phosphate from alpha-D-glucosamine 6-phosphate (route II): step 2/2. It functions in the pathway nucleotide-sugar biosynthesis; UDP-N-acetyl-alpha-D-glucosamine biosynthesis; UDP-N-acetyl-alpha-D-glucosamine from N-acetyl-alpha-D-glucosamine 1-phosphate: step 1/1. Its pathway is bacterial outer membrane biogenesis; LPS lipid A biosynthesis. Catalyzes the last two sequential reactions in the de novo biosynthetic pathway for UDP-N-acetylglucosamine (UDP-GlcNAc). The C-terminal domain catalyzes the transfer of acetyl group from acetyl coenzyme A to glucosamine-1-phosphate (GlcN-1-P) to produce N-acetylglucosamine-1-phosphate (GlcNAc-1-P), which is converted into UDP-GlcNAc by the transfer of uridine 5-monophosphate (from uridine 5-triphosphate), a reaction catalyzed by the N-terminal domain. In Acinetobacter baumannii (strain AYE), this protein is Bifunctional protein GlmU.